Consider the following 446-residue polypeptide: Probable ribosomal RNA small subunit methyltransferase B (446 aa).

Residues 260–266 (CAAPGGK), Asp284, Asp311, and Asp330 each bind S-adenosyl-L-methionine. Cys383 functions as the Nucleophile in the catalytic mechanism.

This sequence belongs to the class I-like SAM-binding methyltransferase superfamily. RsmB/NOP family.

The protein resides in the cytoplasm. It catalyses the reaction cytidine(967) in 16S rRNA + S-adenosyl-L-methionine = 5-methylcytidine(967) in 16S rRNA + S-adenosyl-L-homocysteine + H(+). In terms of biological role, specifically methylates the cytosine at position 967 (m5C967) of 16S rRNA. This is Probable ribosomal RNA small subunit methyltransferase B from Synechocystis sp. (strain ATCC 27184 / PCC 6803 / Kazusa).